Consider the following 456-residue polypeptide: Bifunctional protein GlmU (456 aa).

A pyrophosphorylase region spans residues 1–229; the sequence is MSNSAMSVVI…LSEVEGVNNR (229 aa). Residues 11–14, Lys-25, Gln-76, 81–82, 103–105, Gly-140, Glu-154, Asn-169, and Asn-227 contribute to the UDP-N-acetyl-alpha-D-glucosamine site; these read LAAG, GT, and YGD. Asp-105 is a Mg(2+) binding site. A Mg(2+)-binding site is contributed by Asn-227. The linker stretch occupies residues 230 to 250; the sequence is LQLSALERVYQREQADRLLLA. The tract at residues 251 to 456 is N-acetyltransferase; that stretch reads GVMLLDPARF…SGWQRPVKKK (206 aa). 2 residues coordinate UDP-N-acetyl-alpha-D-glucosamine: Arg-333 and Lys-351. Residue His-363 is the Proton acceptor of the active site. Positions 366 and 377 each coordinate UDP-N-acetyl-alpha-D-glucosamine. Residues Ala-380, 386-387, Ser-405, Ala-423, and Arg-440 each bind acetyl-CoA; that span reads NY.

In the N-terminal section; belongs to the N-acetylglucosamine-1-phosphate uridyltransferase family. It in the C-terminal section; belongs to the transferase hexapeptide repeat family. In terms of assembly, homotrimer. The cofactor is Mg(2+).

The protein resides in the cytoplasm. It carries out the reaction alpha-D-glucosamine 1-phosphate + acetyl-CoA = N-acetyl-alpha-D-glucosamine 1-phosphate + CoA + H(+). The enzyme catalyses N-acetyl-alpha-D-glucosamine 1-phosphate + UTP + H(+) = UDP-N-acetyl-alpha-D-glucosamine + diphosphate. It functions in the pathway nucleotide-sugar biosynthesis; UDP-N-acetyl-alpha-D-glucosamine biosynthesis; N-acetyl-alpha-D-glucosamine 1-phosphate from alpha-D-glucosamine 6-phosphate (route II): step 2/2. Its pathway is nucleotide-sugar biosynthesis; UDP-N-acetyl-alpha-D-glucosamine biosynthesis; UDP-N-acetyl-alpha-D-glucosamine from N-acetyl-alpha-D-glucosamine 1-phosphate: step 1/1. It participates in bacterial outer membrane biogenesis; LPS lipid A biosynthesis. In terms of biological role, catalyzes the last two sequential reactions in the de novo biosynthetic pathway for UDP-N-acetylglucosamine (UDP-GlcNAc). The C-terminal domain catalyzes the transfer of acetyl group from acetyl coenzyme A to glucosamine-1-phosphate (GlcN-1-P) to produce N-acetylglucosamine-1-phosphate (GlcNAc-1-P), which is converted into UDP-GlcNAc by the transfer of uridine 5-monophosphate (from uridine 5-triphosphate), a reaction catalyzed by the N-terminal domain. This is Bifunctional protein GlmU from Pectobacterium carotovorum subsp. carotovorum (strain PC1).